A 333-amino-acid chain; its full sequence is MAHPLVFITGATGFLGSATAVAALKAGYRLRICVRKPSDELQNLLSGYSEQVEFVTVADWTAEGAFRGLLDGADYVIHLAHPIPSGPEKEYYFTPAVKATTALLREAARVPSIKKVVVTSSIAALMPLDGIPSGGVIKEDNDWDFDVDETEDFAASNDPRGIPMRLYHASKLLANQTAWEFRKTAKPPYALVTLHPAFVYGRNPVQTTAEAIQESSNGLLWHAIMTGVPHHSYSRVPGVHIDDVVEAHLRALDPAIPDGSKYLLAAKGGTWKEVADVIQRDYSYLGAKITPDIEEEFLSTDSSKAEAELGMRWRAWEQMVRDVVDQQLEFANV.

Residue Y167 coordinates NADP(+).

This sequence belongs to the NAD(P)-dependent epimerase/dehydratase family. Dihydroflavonol-4-reductase subfamily.

In terms of biological role, ketoreductase; part of the gene cluster that mediates the biosynthesis of sphingofungins, bioactive molecules acting as sphingolipid inhibitors via inhibiting serine palmitoyl transferase (SPT). Does not seem to be involved in any biosynthetic process leading to the production of sphingofungins, but might be connected to a regulation or resistance mechanism. The sequence is that of Ketoreductase sphI from Aspergillus fumigatus (strain CBS 144.89 / FGSC A1163 / CEA10) (Neosartorya fumigata).